Consider the following 195-residue polypeptide: Fe/S biogenesis protein NfuA (195 aa).

The [4Fe-4S] cluster site is built by C152 and C155.

Belongs to the NfuA family. In terms of assembly, homodimer. The cofactor is [4Fe-4S] cluster.

In terms of biological role, involved in iron-sulfur cluster biogenesis. Binds a 4Fe-4S cluster, can transfer this cluster to apoproteins, and thereby intervenes in the maturation of Fe/S proteins. Could also act as a scaffold/chaperone for damaged Fe/S proteins. This chain is Fe/S biogenesis protein NfuA, found in Vibrio cholerae serotype O1 (strain ATCC 39315 / El Tor Inaba N16961).